The following is a 618-amino-acid chain: Protein fem-1 homolog C (618 aa).

ANK repeat units follow at residues 2 to 31 (DLKT…DREV), 40 to 70 (NGAT…PVEL), 82 to 111 (EGAP…SVNN), 115 to 144 (TNST…DLEV), 148 to 177 (HGHT…DVNR), 181 to 210 (KGNT…SMEK), and 213 to 243 (YGMT…GLAE). TPR repeat units lie at residues 245–279 (ISAL…RHSE) and 337–370 (SYYI…QQSN). ANK repeat units follow at residues 482–524 (NGFS…DVNS) and 528–557 (DDNS…HFDS).

It belongs to the fem-1 family. Component of a CRL2 E3 ubiquitin-protein ligase complex, also named ECS (Elongin BC-CUL2/5-SOCS-box protein) complex.

Its pathway is protein modification; protein ubiquitination. Substrate-recognition component of a Cul2-RING (CRL2) E3 ubiquitin-protein ligase complex of the DesCEND (destruction via C-end degrons) pathway, which recognizes a C-degron located at the extreme C terminus of target proteins, leading to their ubiquitination and degradation. The C-degron recognized by the DesCEND pathway is usually a motif of less than ten residues and can be present in full-length proteins, truncated proteins or proteolytically cleaved forms. The CRL2(FEM1C) complex specifically recognizes proteins with an arginine at the C-terminus: recognizes and binds proteins ending with -Lys/Arg-Xaa-Arg and -Lys/Arg-Xaa-Xaa-Arg C-degrons, leading to their ubiquitination and degradation. This Danio rerio (Zebrafish) protein is Protein fem-1 homolog C.